The chain runs to 101 residues: Small ribosomal subunit protein uS14 (101 aa).

The protein belongs to the universal ribosomal protein uS14 family. Part of the 30S ribosomal subunit. Contacts proteins S3 and S10.

In terms of biological role, binds 16S rRNA, required for the assembly of 30S particles and may also be responsible for determining the conformation of the 16S rRNA at the A site. The protein is Small ribosomal subunit protein uS14 of Alcanivorax borkumensis (strain ATCC 700651 / DSM 11573 / NCIMB 13689 / SK2).